Consider the following 340-residue polypeptide: Organic solute transporter subunit alpha (340 aa).

The Extracellular portion of the chain corresponds to 1–52; that stretch reads MEPDRTQIRLDPRYTADLLEILKTNYSVPSACFSYPPTAAQLLRALGPVDIS. N-linked (GlcNAc...) asparagine glycosylation is present at Asn25. The chain crosses the membrane as a helical span at residues 53-73; that stretch reads LMVIMTLFVLGSIAIFLEAAV. The Cytoplasmic portion of the chain corresponds to 74–87; that stretch reads YLHKNTRCPIKRKT. The helical transmembrane segment at 88–108 threads the bilayer; it reads LIWCSSSPTIVSAFSCFGLWI. Topologically, residues 109 to 110 are extracellular; sequence PR. Residues 111–131 traverse the membrane as a helical segment; the sequence is ALTLVEMAITTFYSMCFYLLM. Residues 132–186 lie on the Cytoplasmic side of the membrane; it reads QAMVEGFGGKEAVLRTLKDTPVMIHTGPCCCCCPCCPRIKITRKRLQLLLLGPIQ. The helical transmembrane segment at 187 to 207 threads the bilayer; sequence YAFFKISLTLVGLFLIPDGIF. Residues 208–219 are Extracellular-facing; the sequence is DPSDISEGSTAL. A helical membrane pass occupies residues 220 to 240; that stretch reads WINTFLGVSTLSALWTIGIIF. Over 241-255 the chain is Cytoplasmic; that stretch reads RQARLHLGEQNIGAK. A helical transmembrane segment spans residues 256–276; the sequence is FVLFQALLILSALQPSIFSVL. The Extracellular segment spans residues 277–295; that stretch reads ASGGQIACSPPFSSKIRSQ. The helical transmembrane segment at 296–316 threads the bilayer; that stretch reads VMNCHLLILESFLITVLTRIY. Residues 317–340 lie on the Cytoplasmic side of the membrane; that stretch reads YRRKDDKLGYEPFSSPDQDLNLKA. At Ser330 the chain carries Phosphoserine.

This sequence belongs to the OST-alpha family. Interacts with SLC51B. The Ost-alpha/Ost-beta complex is a heterodimer composed of alpha (SLC51A) and beta (SLC51B) subunit.

It is found in the cell membrane. The protein resides in the endoplasmic reticulum membrane. The catalysed reaction is taurocholate(out) = taurocholate(in). It catalyses the reaction estrone 3-sulfate(out) = estrone 3-sulfate(in). It carries out the reaction dehydroepiandrosterone 3-sulfate(out) = dehydroepiandrosterone 3-sulfate(in). The enzyme catalyses tauroursodeoxycholate(out) = tauroursodeoxycholate(in). The catalysed reaction is glycoursodeoxycholate(out) = glycoursodeoxycholate(in). It catalyses the reaction glycocholate(out) = glycocholate(in). It carries out the reaction taurochenodeoxycholate(out) = taurochenodeoxycholate(in). The enzyme catalyses glycochenodeoxycholate(out) = glycochenodeoxycholate(in). The catalysed reaction is taurodeoxycholate(out) = taurodeoxycholate(in). It catalyses the reaction glycodeoxycholate(out) = glycodeoxycholate(in). It carries out the reaction prostaglandin E2(out) = prostaglandin E2(in). Functionally, essential component of the Ost-alpha/Ost-beta complex, a heterodimer that acts as the intestinal basolateral transporter responsible for bile acid export from enterocytes into portal blood. Efficiently transports the major species of bile acids (taurocholate). Taurine conjugates are transported more efficiently across the basolateral membrane than glycine-conjugated bile acids. Can also transport steroids such as estrone 3-sulfate and dehydroepiandrosterone 3-sulfate, therefore playing a role in the enterohepatic circulation of sterols. Able to transport eicosanoids such as prostaglandin E2. This chain is Organic solute transporter subunit alpha (SLC51A), found in Bos taurus (Bovine).